We begin with the raw amino-acid sequence, 585 residues long: Glycerol-3-phosphate dehydrogenase (585 aa).

Position 37–65 (37–65) interacts with FAD; it reads DVVVIGGGVVGSGCALDAATRGLKVALVE.

This sequence belongs to the FAD-dependent glycerol-3-phosphate dehydrogenase family. FAD serves as cofactor.

It localises to the cytoplasm. The enzyme catalyses a quinone + sn-glycerol 3-phosphate = dihydroxyacetone phosphate + a quinol. In Mycobacterium leprae (strain TN), this protein is Glycerol-3-phosphate dehydrogenase (glpD).